A 73-amino-acid chain; its full sequence is uncharacterized protein (73 aa).

An N-terminal signal peptide occupies residues 1–30 (MVDFYFIEEKVAYRAAFTTTGKIAATLGLA).

This is an uncharacterized protein from Archaeoglobus fulgidus (strain ATCC 49558 / DSM 4304 / JCM 9628 / NBRC 100126 / VC-16).